Reading from the N-terminus, the 198-residue chain is TM2 domain-containing protein 2 (198 aa).

Residues Met1–Ser27 form the signal peptide. Residues Gln28–Lys128 lie on the Extracellular side of the membrane. 3 N-linked (GlcNAc...) asparagine glycosylation sites follow: Asn29, Asn40, and Asn76. Residues Tyr129–Val149 traverse the membrane as a helical segment. The region spanning Gly131–Ile179 is the TM2 domain. Over Asp150–Thr166 the chain is Cytoplasmic. A helical membrane pass occupies residues Leu167–Met187. Topologically, residues Pro188–Tyr198 are extracellular.

The protein belongs to the TM2 family.

Its subcellular location is the membrane. The chain is TM2 domain-containing protein 2 (tm2d2) from Xenopus tropicalis (Western clawed frog).